A 350-amino-acid polypeptide reads, in one-letter code: Flap endonuclease 1 (350 aa).

The segment at 1–102 (MGVTELGKLI…IEIEKRRRVR (102 aa)) is N-domain. Residues Asp31, Asp84, Glu156, Glu158, Asp177, Asp179, and Asp241 each coordinate Mg(2+). The segment at 120–263 (EARKYAQRAL…RALRLIQEYG (144 aa)) is I-domain.

It belongs to the XPG/RAD2 endonuclease family. FEN1 subfamily. Interacts with PCNA. PCNA stimulates the nuclease activity without altering cleavage specificity. The cofactor is Mg(2+).

Structure-specific nuclease with 5'-flap endonuclease and 5'-3' exonuclease activities involved in DNA replication and repair. During DNA replication, cleaves the 5'-overhanging flap structure that is generated by displacement synthesis when DNA polymerase encounters the 5'-end of a downstream Okazaki fragment. Binds the unpaired 3'-DNA end and kinks the DNA to facilitate 5' cleavage specificity. Cleaves one nucleotide into the double-stranded DNA from the junction in flap DNA, leaving a nick for ligation. Also involved in the base excision repair (BER) pathway. Acts as a genome stabilization factor that prevents flaps from equilibrating into structures that lead to duplications and deletions. Also possesses 5'-3' exonuclease activity on nicked or gapped double-stranded DNA. This is Flap endonuclease 1 from Caldivirga maquilingensis (strain ATCC 700844 / DSM 13496 / JCM 10307 / IC-167).